A 40-amino-acid polypeptide reads, in one-letter code: Photosystem II reaction center protein Y (40 aa).

The chain crosses the membrane as a helical span at residues 5 to 23 (LVLVASPILLAVGWAGFNI).

The protein belongs to the PsbY family. PSII is composed of 1 copy each of membrane proteins PsbA, PsbB, PsbC, PsbD, PsbE, PsbF, PsbH, PsbI, PsbJ, PsbK, PsbL, PsbM, PsbT, PsbX, PsbY, PsbZ, Psb30/Ycf12, peripheral proteins PsbO, CyanoQ (PsbQ), PsbU, PsbV and a large number of cofactors. It forms dimeric complexes.

The protein localises to the cellular thylakoid membrane. Functionally, loosely associated component of the core of photosystem II (PSII), it is not always seen in crystals. PSII is a light-driven water plastoquinone oxidoreductase, using light energy to abstract electrons from H(2)O, generating a proton gradient subsequently used for ATP formation. The polypeptide is Photosystem II reaction center protein Y (Synechococcus sp. (strain RCC307)).